The following is a 257-amino-acid chain: Flap endonuclease Xni (257 aa).

D112 provides a ligand contact to Mg(2+). One can recognise a 5'-3' exonuclease domain in the interval 169–256 (EQKKLVEFWA…LGFSLKQLRL (88 aa)). The K(+) site is built by F179, A180, P188, V190, and I193. Residues 192 to 197 (GIGTKS) form an interaction with DNA region.

This sequence belongs to the Xni family. It depends on Mg(2+) as a cofactor. K(+) is required as a cofactor.

Functionally, has flap endonuclease activity. During DNA replication, flap endonucleases cleave the 5'-overhanging flap structure that is generated by displacement synthesis when DNA polymerase encounters the 5'-end of a downstream Okazaki fragment. In Pseudoalteromonas translucida (strain TAC 125), this protein is Flap endonuclease Xni.